A 321-amino-acid chain; its full sequence is Protoheme IX farnesyltransferase (321 aa).

A run of 10 helical transmembrane segments spans residues 28 to 48 (VMSLVIFTALAGMLIAPDPVH), 49 to 69 (PIVGFASLLAIAVGAGASGAL), 94 to 114 (VMPNEALAFGLTLSFLSVFTL), 116 to 136 (IVANWLAAGFLAFTIFFYVVI), 149 to 169 (IVIGGAAGAFPPMVGYAAATG), 176 to 196 (FILFAIIFIWTPPHFWALALG), 222 to 242 (ILLYTLLLAPLGVAPWLLGFA), 247 to 267 (GMLSIALGAAMLFFAARVYIV), 277 to 297 (AKALFGFSILYLFLLFAEIVV), and 300 to 320 (LVPIVVAMGAWLTSGMFPGFF).

It belongs to the UbiA prenyltransferase family. Protoheme IX farnesyltransferase subfamily.

It localises to the cell inner membrane. It catalyses the reaction heme b + (2E,6E)-farnesyl diphosphate + H2O = Fe(II)-heme o + diphosphate. It functions in the pathway porphyrin-containing compound metabolism; heme O biosynthesis; heme O from protoheme: step 1/1. Its function is as follows. Converts heme B (protoheme IX) to heme O by substitution of the vinyl group on carbon 2 of heme B porphyrin ring with a hydroxyethyl farnesyl side group. The polypeptide is Protoheme IX farnesyltransferase (Beijerinckia indica subsp. indica (strain ATCC 9039 / DSM 1715 / NCIMB 8712)).